Reading from the N-terminus, the 304-residue chain is 1D-myo-inositol 2-acetamido-2-deoxy-alpha-D-glucopyranoside deacetylase 2 (304 aa).

Zn(2+) contacts are provided by His-17, Asp-20, and His-152.

The protein belongs to the MshB deacetylase family. Zn(2+) is required as a cofactor.

The enzyme catalyses 1D-myo-inositol 2-acetamido-2-deoxy-alpha-D-glucopyranoside + H2O = 1D-myo-inositol 2-amino-2-deoxy-alpha-D-glucopyranoside + acetate. In terms of biological role, catalyzes the deacetylation of 1D-myo-inositol 2-acetamido-2-deoxy-alpha-D-glucopyranoside (GlcNAc-Ins) in the mycothiol biosynthesis pathway. The chain is 1D-myo-inositol 2-acetamido-2-deoxy-alpha-D-glucopyranoside deacetylase 2 from Catenulispora acidiphila (strain DSM 44928 / JCM 14897 / NBRC 102108 / NRRL B-24433 / ID139908).